A 647-amino-acid chain; its full sequence is Threonine--tRNA ligase (647 aa).

Positions 1–61 (MINITFPDGA…TEDGSIEIVT (61 aa)) constitute a TGS domain. The tract at residues 242–540 (DHRKLGKELD…LIENYKGAFP (299 aa)) is catalytic. Zn(2+)-binding residues include Cys-336, His-387, and His-517.

Belongs to the class-II aminoacyl-tRNA synthetase family. In terms of assembly, homodimer. It depends on Zn(2+) as a cofactor.

The protein localises to the cytoplasm. It catalyses the reaction tRNA(Thr) + L-threonine + ATP = L-threonyl-tRNA(Thr) + AMP + diphosphate + H(+). In terms of biological role, catalyzes the attachment of threonine to tRNA(Thr) in a two-step reaction: L-threonine is first activated by ATP to form Thr-AMP and then transferred to the acceptor end of tRNA(Thr). Also edits incorrectly charged L-seryl-tRNA(Thr). This chain is Threonine--tRNA ligase, found in Streptococcus pneumoniae serotype 2 (strain D39 / NCTC 7466).